Here is a 430-residue protein sequence, read N- to C-terminus: Putative O-antigen transporter (430 aa).

The next 12 membrane-spanning stretches (helical) occupy residues 23-39 (IIIAGVQLASISYLISM), 45-61 (YAIFSLLTGLLVWCSAV), 96-112 (IAIIFFIALFYIFSGVI), 131-147 (LFFTSCLVFSSIGIGAI), 163-179 (LLNALSYMIGMLGLLYI), 192-208 (LIVLYLPVGMISLCYIV), 236-252 (LFTLLSIVVLQTDYMVI), 266-282 (VTMKIFGLVFFIYTAIL), 309-325 (ILLGSLYVVGCTIFIYL), 342-358 (VSILSFMLIGIYFCIRV), 373-389 (LKILWILVPLQAIIGGI), and 400-416 (ISGVLLGLIISFALTVF).

Its subcellular location is the cell inner membrane. The protein operates within bacterial outer membrane biogenesis; LPS O-antigen biosynthesis. In terms of biological role, may be involved in the translocation process of the nascent O-polysaccharide molecules and/or its ligation to lipid A core units. The protein is Putative O-antigen transporter (rfbX) of Salmonella typhimurium (strain LT2 / SGSC1412 / ATCC 700720).